Consider the following 119-residue polypeptide: NADH-quinone oxidoreductase subunit A (119 aa).

Transmembrane regions (helical) follow at residues 7-27, 63-83, and 88-108; these read YPVL…VSIG, LVAI…PWGV, and IGWP…LGFA.

Belongs to the complex I subunit 3 family. As to quaternary structure, NDH-1 is composed of 14 different subunits. Subunits NuoA, H, J, K, L, M, N constitute the membrane sector of the complex.

It is found in the cell inner membrane. It carries out the reaction a quinone + NADH + 5 H(+)(in) = a quinol + NAD(+) + 4 H(+)(out). In terms of biological role, NDH-1 shuttles electrons from NADH, via FMN and iron-sulfur (Fe-S) centers, to quinones in the respiratory chain. The immediate electron acceptor for the enzyme in this species is believed to be ubiquinone. Couples the redox reaction to proton translocation (for every two electrons transferred, four hydrogen ions are translocated across the cytoplasmic membrane), and thus conserves the redox energy in a proton gradient. In Burkholderia ambifaria (strain MC40-6), this protein is NADH-quinone oxidoreductase subunit A.